The sequence spans 89 residues: Small ribosomal subunit protein bS20 (89 aa).

It belongs to the bacterial ribosomal protein bS20 family.

Binds directly to 16S ribosomal RNA. In Helicobacter pylori (strain ATCC 700392 / 26695) (Campylobacter pylori), this protein is Small ribosomal subunit protein bS20.